The primary structure comprises 336 residues: MKEPLKVACVQAAPVFLDLDATVDKTITLMEQAAAAGAGLIAFPETWIPGYPWFLWLDAPAWNMPLVQRYHQQSLVLDSVQARRISDAARHLGLYVVLGYSERNKASLYIGQWIIDDHGETVGVRRKLKATHVERTMFGEGDGASLRTFETPVGVLGALCCWEHLQPLSKYAMYAQNEQIHVAAWPSFSLYRNATSALGPEVNTAASRVYAAEGQCFVLAPCAIVSPEMIEMLCDSDAKRSLLQAGGGHARIFGPDGSDLATPLGEHEEGLLYATLDPAALTLAKVAADPAGHYSRPDVTRLMFNPNPTPCVVDLPDLPISSESIELLRPDIALEV.

The 274-residue stretch at Leu-5–Pro-278 folds into the CN hydrolase domain. Glu-45 (proton acceptor) is an active-site residue. Lys-127 acts as the Proton donor in catalysis. Cys-161 serves as the catalytic Nucleophile.

The protein belongs to the carbon-nitrogen hydrolase superfamily. Nitrilase family.

The catalysed reaction is a nitrile + 2 H2O = a carboxylate + NH4(+). The enzyme catalyses (indol-3-yl)acetonitrile + 2 H2O = (indol-3-yl)acetate + NH4(+). It carries out the reaction phenylpropanonitrile + 2 H2O = 3-phenylpropanoate + NH4(+). Its function is as follows. Arylacetonitrilase which is capable of hydrolyzing indole-3-acetonitrile (IAN) to the plant hormone indole-3-acetate (IAA), and allows the plant pathogenic bacterium to use IAN as a sole nitrogen source. Is also able to hydrolyze phenylpropionitrile (PPN), allowing the use of this compound as a sole nitrogen source. This enzyme may represent an additional mechanism for IAA biosynthesis or may be used to degrade and assimilate aldoximes and nitriles produced during host plant secondary metabolism. This chain is Nitrilase, found in Pseudomonas syringae pv. syringae (strain B728a).